The primary structure comprises 237 residues: Lipoprotein-releasing system ATP-binding protein LolD (237 aa).

Residues 16 to 237 (LKCEGLTRIY…LDQGRLSEDA (222 aa)) enclose the ABC transporter domain. 52-59 (GSSGSGKT) contributes to the ATP binding site.

Belongs to the ABC transporter superfamily. Lipoprotein translocase (TC 3.A.1.125) family. In terms of assembly, the complex is composed of two ATP-binding proteins (LolD) and two transmembrane proteins (LolC and LolE).

Its subcellular location is the cell inner membrane. Part of the ABC transporter complex LolCDE involved in the translocation of mature outer membrane-directed lipoproteins, from the inner membrane to the periplasmic chaperone, LolA. Responsible for the formation of the LolA-lipoprotein complex in an ATP-dependent manner. The chain is Lipoprotein-releasing system ATP-binding protein LolD from Chromohalobacter salexigens (strain ATCC BAA-138 / DSM 3043 / CIP 106854 / NCIMB 13768 / 1H11).